A 513-amino-acid polypeptide reads, in one-letter code: Acetylcholine receptor subunit delta (513 aa).

The N-terminal stretch at 1–18 (MAVLLALFGALVLSGGLC) is a signal peptide. Residues 19–244 (VNQEERLIHH…ITFYLIIKRK (226 aa)) lie on the Extracellular side of the membrane. 2 N-linked (GlcNAc...) asparagine glycosylation sites follow: Asn88 and Asn161. Cys148 and Cys162 are oxidised to a cystine. The next 3 helical transmembrane spans lie at 245 to 269 (PLFY…VFYL), 277 to 295 (MTLV…LLVS), and 311 to 332 (YLLF…VLNF). The Cytoplasmic portion of the chain corresponds to 333–467 (HFRTPSTHVM…WNRVARTLDR (135 aa)). Tyr388 is modified (phosphotyrosine; by Tyr-kinases). A helical membrane pass occupies residues 468-490 (LCLFLITPMLVVGTLWIFLMGIY).

It belongs to the ligand-gated ion channel (TC 1.A.9) family. Acetylcholine receptor (TC 1.A.9.1) subfamily. As to quaternary structure, pentamer of two alpha chains, and one each of the beta, delta, and gamma chains.

It is found in the postsynaptic cell membrane. It localises to the cell membrane. The enzyme catalyses K(+)(in) = K(+)(out). It catalyses the reaction Na(+)(in) = Na(+)(out). After binding acetylcholine, the AChR responds by an extensive change in conformation that affects all subunits and leads to opening of an ion-conducting channel across the plasma membrane. The chain is Acetylcholine receptor subunit delta (CHRND) from Gallus gallus (Chicken).